Reading from the N-terminus, the 214-residue chain is Mediator of RNA polymerase II transcription subunit 29 (214 aa).

Residues M1–V78 are disordered. Gly residues predominate over residues V15–G34. The segment covering Q44–Q74 has biased composition (low complexity).

The protein belongs to the Mediator complex subunit 29 family. Component of the Mediator complex.

It localises to the nucleus. Functionally, component of the Mediator complex, a coactivator involved in the regulated transcription of nearly all RNA polymerase II-dependent genes. Mediator functions as a bridge to convey information from gene-specific regulatory proteins to the basal RNA polymerase II transcription machinery. Mediator is recruited to promoters by direct interactions with regulatory proteins and serves as a scaffold for the assembly of a functional preinitiation complex with RNA polymerase II and the general transcription factors. This is Mediator of RNA polymerase II transcription subunit 29 (ix) from Aedes aegypti (Yellowfever mosquito).